Consider the following 245-residue polypeptide: UPF0246 protein LBUL_1917 (245 aa).

The protein belongs to the UPF0246 family.

The chain is UPF0246 protein LBUL_1917 from Lactobacillus delbrueckii subsp. bulgaricus (strain ATCC BAA-365 / Lb-18).